The sequence spans 506 residues: Aminoaldehyde dehydrogenase 2 (506 aa).

Aspartate 101 serves as a coordination point for Na(+). NAD(+) is bound by residues 161–163 and 187–190; these read TPW and KPSE. Position 191 (leucine 191) interacts with Na(+). Residues 241–244 and glutamate 262 contribute to the NAD(+) site; that span reads STET. Glutamate 262 (proton acceptor) is an active-site residue. The Nucleophile role is filled by cysteine 297. The NAD(+) site is built by glutamate 396 and tryptophan 462.

It belongs to the aldehyde dehydrogenase family.

It catalyses the reaction 4-aminobutanal + NAD(+) + H2O = 4-aminobutanoate + NADH + 2 H(+). It carries out the reaction 3-aminopropanal + NAD(+) + H2O = beta-alanine + NADH + 2 H(+). The enzyme catalyses 4-(trimethylamino)butanal + NAD(+) + H2O = 4-(trimethylamino)butanoate + NADH + 2 H(+). The catalysed reaction is 4-guanidinobutanal + NAD(+) + H2O = 4-guanidinobutanoate + NADH + 2 H(+). The protein operates within amine and polyamine biosynthesis; betaine biosynthesis via choline pathway; betaine from betaine aldehyde: step 1/1. In terms of biological role, dehydrogenase that catalyzes the oxidation of several aminoaldehydes. Metabolizes and detoxifies aldehyde products of polyamine degradation to non-toxic amino acids. Catalyzes the oxidation of 4-aminobutanal and 3-aminopropanal to 4-aminobutanoate and beta-alanine, respectively. Catalyzes the oxidation of 4-(trimethylamino)butanal and 4-guanidinobutanal to 4-trimethylammoniobutanoate and 4-guanidinobutanoate, respectively. This Zea mays (Maize) protein is Aminoaldehyde dehydrogenase 2.